The sequence spans 244 residues: Flavin-dependent thymidylate synthase (244 aa).

The ThyX domain occupies 2–207 (VRVTLVNYTR…ELRPIIKWAK (206 aa)). FAD contacts are provided by residues S56, 80 to 82 (RHR), and Q88. Residues 77-80 (QLVR), 88-92 (QQSQR), and R146 contribute to the dUMP site. The ThyX motif signature appears at 80–90 (RHRIASYTQQS). FAD-binding positions include 162-164 (NLR) and H168. R173 is a dUMP binding site. The Involved in ionization of N3 of dUMP, leading to its activation role is filled by R173.

It belongs to the thymidylate synthase ThyX family. Homotetramer. Requires FAD as cofactor.

The catalysed reaction is dUMP + (6R)-5,10-methylene-5,6,7,8-tetrahydrofolate + NADPH + H(+) = dTMP + (6S)-5,6,7,8-tetrahydrofolate + NADP(+). It functions in the pathway pyrimidine metabolism; dTTP biosynthesis. Functionally, catalyzes the reductive methylation of 2'-deoxyuridine-5'-monophosphate (dUMP) to 2'-deoxythymidine-5'-monophosphate (dTMP) while utilizing 5,10-methylenetetrahydrofolate (mTHF) as the methyl donor, and NADPH and FADH(2) as the reductant. The polypeptide is Flavin-dependent thymidylate synthase (Pyrococcus abyssi (strain GE5 / Orsay)).